The chain runs to 270 residues: NAD kinase (270 aa).

Asp61 acts as the Proton acceptor in catalysis. NAD(+) is bound by residues 61 to 62 (DG), 133 to 134 (NE), Arg144, Arg163, Asp165, and 176 to 181 (TAYNLS).

Belongs to the NAD kinase family. A divalent metal cation serves as cofactor.

The protein resides in the cytoplasm. The enzyme catalyses NAD(+) + ATP = ADP + NADP(+) + H(+). In terms of biological role, involved in the regulation of the intracellular balance of NAD and NADP, and is a key enzyme in the biosynthesis of NADP. Catalyzes specifically the phosphorylation on 2'-hydroxyl of the adenosine moiety of NAD to yield NADP. In Natronomonas pharaonis (strain ATCC 35678 / DSM 2160 / CIP 103997 / JCM 8858 / NBRC 14720 / NCIMB 2260 / Gabara) (Halobacterium pharaonis), this protein is NAD kinase.